Here is a 916-residue protein sequence, read N- to C-terminus: DNA topoisomerase 1 alpha (916 aa).

Residues 1 to 369 are disordered; the sequence is MGTETVSKPV…SSPSSGDGQK (369 aa). Low complexity predominate over residues 34–47; that stretch reads SNSNQSKSNSQRSK. Polar residues predominate over residues 60–76; the sequence is PVTSPNGTTPSNKTSIV. The segment covering 77–93 has biased composition (low complexity); the sequence is KSSMPSSSSKASPAKSP. A compositionally biased stretch (basic and acidic residues) spans 102–119; the sequence is VKDRSQLQKDQSECKIEH. Residues 130–148 are compositionally biased toward polar residues; the sequence is SILSGNKGPTSSRQVSSPQ. The segment covering 149–168 has biased composition (basic and acidic residues); it reads PEKKNNGDRPLDRASRIIKD. S170 is modified (phosphoserine). A compositionally biased stretch (polar residues) spans 230–239; it reads KNSSADQSSL. A compositionally biased stretch (basic and acidic residues) spans 253 to 267; the sequence is MKQDSVKKEIDDKGR. Positions 285–294 are enriched in acidic residues; that stretch reads GTDDDDDDDV. At T286 the chain carries Phosphothreonine. Over residues 354-366 the composition is skewed to low complexity; the sequence is YSTSSKSSPSSGD. Interaction with DNA regions lie at residues 577–578, 640–645, and 731–733; these read KY, RAGNEK, and TAK. The Topo IB-type catalytic domain maps to 584 to 914; the sequence is GSSLKGLSDK…MDVEPEYRFS (331 aa). Residues 778–860 are a coiled coil; it reads QRTVSKTHGA…ERDMHTKEDL (83 aa). Y872 acts as the O-(3'-phospho-DNA)-tyrosine intermediate in catalysis.

This sequence belongs to the type IB topoisomerase family. As to quaternary structure, interacts with DEK3. As to expression, expressed in inflorescence meristems. Expressed in primordia of sepals, petals, stamens, carpels and ovules. Expressed in midstage embryos.

The protein localises to the nucleus. The catalysed reaction is ATP-independent breakage of single-stranded DNA, followed by passage and rejoining.. In terms of biological role, releases the supercoiling and torsional tension of DNA introduced during the DNA replication and transcription by transiently cleaving and rejoining one strand of the DNA duplex. Introduces a single-strand break via transesterification at a target site in duplex DNA. The scissile phosphodiester is attacked by the catalytic tyrosine of the enzyme, resulting in the formation of a DNA-(3'-phosphotyrosyl)-enzyme intermediate and the expulsion of a 5'-OH DNA strand. The free DNA strand then rotates around the intact phosphodiester bond on the opposing strand, thus removing DNA supercoils. Finally, in the religation step, the DNA 5'-OH attacks the covalent intermediate to expel the active-site tyrosine and restore the DNA phosphodiester backbone. Can complement a TOP1-deficient yeast mutant. Plays a critical role in the maintenance of a regular pattern of organ initiation. Topoisomerases I enzymes (TOP1A and TOP1B) are essential for plant survival. Functions together with the stem cell maintenance gene WUSCHEL (WUS) in stem cell regulation. Required to maintain developmentally regulated gene repression. Functions synergistically with chromatin remodeling factors. Is required for the repression of WUS expression in flower development. Plays a role in polycomb group (PcG) protein-mediated histone H3 trimethylation on 'Lys-27' (H3K27me3) at the WUS gene locus. H3K27me3 induces transcriptional repression of WUS. May assist AGAMOUS (AG) in recruiting PcG proteins to WUS locus. Reduces nucleosome density, especially at genes that are targets of PcG proteins. Plays a role in epigenetic silencing. Involved in RNA-directed DNA methylation (RdDM) by promoting Pol V transcription to generate long non-coding RNA transcripts. Is dispensable for Pol IV-mediated small interfering RNA (siRNA) biogenesis. Promotes transposable element (TE) silencing at endogenous RdDM target loci through histone H3 dimethylation of 'Lys-9' (H3K9me2). Promotes the production of Pol V-dependent long non-coding transcripts that facilitate the recruitment of siRNA-AGO4 and AGO4 occupancy at TEs. This is DNA topoisomerase 1 alpha from Arabidopsis thaliana (Mouse-ear cress).